The primary structure comprises 306 residues: Recombination-associated protein RdgC (306 aa).

Belongs to the RdgC family.

The protein localises to the cytoplasm. It is found in the nucleoid. May be involved in recombination. The chain is Recombination-associated protein RdgC from Pseudomonas syringae pv. syringae (strain B728a).